The chain runs to 847 residues: Beta-galactosidase 1 (847 aa).

An N-terminal signal peptide occupies residues 1–32 (MGSKPNAMKNVVAMAAVSALFLLGFLVCSVSG). Residue Glu-190 is the Proton donor of the active site. Glu-259 functions as the Nucleophile in the catalytic mechanism. Residue Asn-469 is glycosylated (N-linked (GlcNAc...) asparagine). In terms of domain architecture, SUEL-type lectin spans 761–847 (KPLHPKAHLQ…KKLAVEAVCA (87 aa)).

This sequence belongs to the glycosyl hydrolase 35 family. Ubiquitous, at low levels.

It is found in the secreted. The protein resides in the extracellular space. It localises to the apoplast. It catalyses the reaction Hydrolysis of terminal non-reducing beta-D-galactose residues in beta-D-galactosides.. This chain is Beta-galactosidase 1 (BGAL1), found in Arabidopsis thaliana (Mouse-ear cress).